A 595-amino-acid polypeptide reads, in one-letter code: Protein UL31 (595 aa).

Residues 1-23 (MGDKPTLVTLLTVAVSSPPPSSP) form the signal peptide. Positions 47 to 94 (TATSEVGEKTAEQEVAAADPETGNERRENRENEGGETRTTGTTAVKRS) are disordered. Over residues 69–82 (GNERRENRENEGGE) the composition is skewed to basic and acidic residues. Asn-176 and Asn-197 each carry an N-linked (GlcNAc...) asparagine; by host glycan.

It belongs to the herpesviridae U10 family. In terms of assembly, interacts with host CGAS.

Its subcellular location is the host cytoplasm. The protein localises to the host nucleus. Its function is as follows. Plays a role in the inhibition of host innate immune system by targeting host CGAS and promoting dissociation of DNA from CGAS, thereby inhibiting the enzymatic activity of CGAS. This Homo sapiens (Human) protein is Protein UL31.